We begin with the raw amino-acid sequence, 204 residues long: Transcription initiation factor TFIID subunit 11b (204 aa).

The interval 38–60 is disordered; sequence PFEAAMEEQEESPVETEQTLEGD. Residues 42–58 are compositionally biased toward acidic residues; it reads AMEEQEESPVETEQTLE. The region spanning 106–195 is the Histone-fold domain; it reads FTEEQMSRYE…RRLKLQGKVP (90 aa).

The protein belongs to the TAF11 family. As to quaternary structure, component of the TFIID complex. TFIID is composed of TATA binding protein (TBP) and a number of TBP-associated factors (TAFs) whose MWs range from 14-217 kDa. In terms of tissue distribution, expressed in roots, leaves and inflorescences.

The protein resides in the nucleus. TAFs are components of the transcription factor IID (TFIID) complex that is essential for mediating regulation of RNA polymerase transcription. The protein is Transcription initiation factor TFIID subunit 11b (TAF11B) of Arabidopsis thaliana (Mouse-ear cress).